The following is a 104-amino-acid chain: Integration host factor subunit beta (104 aa).

Belongs to the bacterial histone-like protein family. Heterodimer of an alpha and a beta chain.

Functionally, this protein is one of the two subunits of integration host factor, a specific DNA-binding protein that functions in genetic recombination as well as in transcriptional and translational control. The protein is Integration host factor subunit beta (ihfB) of Neisseria gonorrhoeae.